The following is a 549-amino-acid chain: MQADFVIIGSGSAGSAMASRLSEDGKHTVIVLEFGGSDVGPFIQMPAALAWPMSMDRYNWGYLSEPEPQLNNRRITAPRGKVIGGSSSINGMVYVRGHAEDFNRWEELGAQGWAYADVLPYFKRMEHSHGGEEGWRGTDGPLHVRRGDARNPLFHAFIEAGKQAGFEATEDYNGGKQEGFGLMEQTTWMGRRWSAATAYLKPALKRPNVELIRCFARKVVIENGRATGVEIERGGKIEIVKANSEVIVSASSFNSPKLLMLSGIGPGQHLQEMGIEVKIDRPGVGANLQDHMEFYFQQTSLKPVSLYSWLPWYMQGIVGAQWMFFKSGLGTSNQFEACAFLRSAPGVKQPDIQYHFLPVAISYDGKAAAKSHGFQAHVGYNLSKSRGAVTLRSSDPKADPVIRFNYMSHPEDWEKFRHCVRLTREIFGQKAFDDYRGPEIQPGPDVQTDDQIDAFLREHLESAYHPCGTCKMGSKDDPMAVVDPDTRVIGVEGLRVADSSIFPSLTYGNLNGPSIMTGEKAADHILGKPRLARSNQEPWINPRWEVSDR.

An FAD-binding site is contributed by 4 to 33 (DFVIIGSGSAGSAMASRLSEDGKHTVIVLE). The active-site Proton acceptor is the His-465.

This sequence belongs to the GMC oxidoreductase family. It depends on FAD as a cofactor.

The enzyme catalyses choline + A = betaine aldehyde + AH2. It catalyses the reaction betaine aldehyde + NAD(+) + H2O = glycine betaine + NADH + 2 H(+). The protein operates within amine and polyamine biosynthesis; betaine biosynthesis via choline pathway; betaine aldehyde from choline (cytochrome c reductase route): step 1/1. In terms of biological role, involved in the biosynthesis of the osmoprotectant glycine betaine. Catalyzes the oxidation of choline to betaine aldehyde and betaine aldehyde to glycine betaine at the same rate. This Rhizobium rhizogenes (strain K84 / ATCC BAA-868) (Agrobacterium radiobacter) protein is Oxygen-dependent choline dehydrogenase.